The sequence spans 156 residues: Small ribosomal subunit protein uS7A/uS7B (156 aa).

This sequence belongs to the universal ribosomal protein uS7 family. In terms of assembly, part of the 30S ribosomal subunit. Contacts proteins S9 and S11.

One of the primary rRNA binding proteins, it binds directly to 16S rRNA where it nucleates assembly of the head domain of the 30S subunit. Is located at the subunit interface close to the decoding center, probably blocks exit of the E-site tRNA. In Bartonella bacilliformis (strain ATCC 35685 / KC583 / Herrer 020/F12,63), this protein is Small ribosomal subunit protein uS7A/uS7B.